The following is a 540-amino-acid chain: Acrosin-binding protein (540 aa).

The first 24 residues, 1–24 (MKLAASFLLMLLEVLLLPETPLSA), serve as a signal peptide directing secretion. Residues 25-104 (EEALASTPGS…ASWFESFCQF (80 aa)) are pro-ACR binding. Residues 25–272 (EEALASTPGS…NPSFFTPRVR (248 aa)) constitute a propeptide, removed in mature form. The interval 181-266 (SLSLGGKEQQ…SKSLSSNPSF (86 aa)) is disordered. Residues 195–213 (LGLEQQHKQEQIQEHKLEE) are compositionally biased toward basic and acidic residues. A compositionally biased stretch (acidic residues) spans 214–241 (AQEQEEQEEEEEEEEAKQEEGQGTEEGL). The segment covering 256 to 266 (QSKSLSSNPSF) has biased composition (polar residues). The pro-ACR binding stretch occupies residues 316-424 (LPHTETLMVL…NQAKIPEKGR (109 aa)).

Binds pro-ACR. Does not bind the mature form of ACR. As to quaternary structure, binds pro-ACR. Does not bind mature form of ACR. Post-translationally, the N-terminus is blocked. In terms of processing, phosphorylated on Tyr residues in capacitated sperm. Synthesized as a 60-kDa precursor, the 32-kDa mature form is post-translationally produced by the removal of the N-terminal half of the precursor during sperm maturation in the testis and/or epididymis.

It localises to the cytoplasmic vesicle. It is found in the secretory vesicle. The protein localises to the acrosome. Acrosomal protein that maintains proacrosin (pro-ACR) as an enzymatically inactive zymogen in the acrosome. Involved also in the acrosome formation. Functionally, maintains pro-ACR as an enzymatically inactive zymogen in the acrosome until acrosomal exocytosis. Partially also contributes to the assembly of acrosomal proteins to form an acrosomal granule. In terms of biological role, rodent specific isoform that participates in the formation of the acrosomal granule into the center of the acrosomal vesicle during early spermiogenesis. In the fertilization process promotes ACR release from the acrosome during acrosomal exocytosis. The sequence is that of Acrosin-binding protein from Rattus norvegicus (Rat).